A 446-amino-acid chain; its full sequence is Ribulose bisphosphate carboxylase large chain (446 aa).

Substrate-binding residues include Asn89 and Thr139. Residue Lys141 is the Proton acceptor of the active site. Lys143 is a binding site for substrate. Residues Lys167, Asp169, and Glu170 each contribute to the Mg(2+) site. An N6-carboxylysine modification is found at Lys167. Residue His260 is the Proton acceptor of the active site. 3 residues coordinate substrate: Arg261, His293, and Ser345.

Belongs to the RuBisCO large chain family. Type I subfamily. In terms of assembly, heterohexadecamer of 8 large chains and 8 small chains; disulfide-linked. The disulfide link is formed within the large subunit homodimers. Mg(2+) serves as cofactor. Post-translationally, the disulfide bond which can form in the large chain dimeric partners within the hexadecamer appears to be associated with oxidative stress and protein turnover.

The protein localises to the plastid. It localises to the chloroplast. It catalyses the reaction 2 (2R)-3-phosphoglycerate + 2 H(+) = D-ribulose 1,5-bisphosphate + CO2 + H2O. The catalysed reaction is D-ribulose 1,5-bisphosphate + O2 = 2-phosphoglycolate + (2R)-3-phosphoglycerate + 2 H(+). In terms of biological role, ruBisCO catalyzes two reactions: the carboxylation of D-ribulose 1,5-bisphosphate, the primary event in carbon dioxide fixation, as well as the oxidative fragmentation of the pentose substrate in the photorespiration process. Both reactions occur simultaneously and in competition at the same active site. This Exacum affine (Persian violet) protein is Ribulose bisphosphate carboxylase large chain.